The primary structure comprises 250 residues: Membrane-spanning 4-domains subfamily A member 8 (250 aa).

Topologically, residues 1 to 74 (MNSMTSAVPV…ALKEGKTLGA (74 aa)) are cytoplasmic. A helical transmembrane segment spans residues 75–95 (IQIIIGLAHIGLGSIMATVLV). Residues 96-98 (GEY) are Extracellular-facing. Residues 99-119 (LSISFYGGFPFWGGLWFIISG) form a helical membrane-spanning segment. Over 120 to 136 (SLSVAAENQPYSYCLLS) the chain is Cytoplasmic. A helical membrane pass occupies residues 137–157 (GSLGLNIVSAICSAVGVILFI). Topologically, residues 158 to 180 (TDLSIPHPYAYPDYYPYAWGVNP) are extracellular. Residues 181–201 (GMAISGVLLVFCLLEFGIACA) traverse the membrane as a helical segment. At 202–250 (SSHFGCQLVCCQSSNVSVIYPNIYAANPVITPEPVTSPPSYSSEIQANK) the chain is on the cytoplasmic side.

Belongs to the MS4A family. Expressed by hematopoietic tissues and cells lines.

The protein localises to the membrane. Its function is as follows. May be involved in signal transduction as a component of a multimeric receptor complex. The chain is Membrane-spanning 4-domains subfamily A member 8 (MS4A8) from Homo sapiens (Human).